A 565-amino-acid chain; its full sequence is Adenine deaminase (565 aa).

Belongs to the metallo-dependent hydrolases superfamily. Adenine deaminase family. Mn(2+) serves as cofactor.

The enzyme catalyses adenine + H2O + H(+) = hypoxanthine + NH4(+). The chain is Adenine deaminase from Gluconobacter oxydans (strain 621H) (Gluconobacter suboxydans).